Consider the following 275-residue polypeptide: Large ribosomal subunit protein uL2 (275 aa).

A disordered region spans residues 222 to 275 (GVAMNPVDHPHGGGEGRNKGRHPTSPWGQKSKGLKTRNNKRTDSMIIRRRAKKK). Over residues 229-239 (DHPHGGGEGRN) the composition is skewed to basic and acidic residues.

It belongs to the universal ribosomal protein uL2 family. Part of the 50S ribosomal subunit. Forms a bridge to the 30S subunit in the 70S ribosome.

Its function is as follows. One of the primary rRNA binding proteins. Required for association of the 30S and 50S subunits to form the 70S ribosome, for tRNA binding and peptide bond formation. It has been suggested to have peptidyltransferase activity; this is somewhat controversial. Makes several contacts with the 16S rRNA in the 70S ribosome. The sequence is that of Large ribosomal subunit protein uL2 from Psychrobacter arcticus (strain DSM 17307 / VKM B-2377 / 273-4).